The primary structure comprises 362 residues: Epoxide hydrolase 4 (362 aa).

Residues Ser-17–Leu-37 traverse the membrane as a helical; Signal-anchor for type II membrane protein segment. Residues Pro-94–Leu-211 form the AB hydrolase-1 domain. Residue Asp-169 is the Nucleophile of the active site. Tyr-281 functions as the Proton donor in the catalytic mechanism. His-336 (proton acceptor) is an active-site residue.

This sequence belongs to the AB hydrolase superfamily. Epoxide hydrolase family.

It localises to the membrane. This Homo sapiens (Human) protein is Epoxide hydrolase 4 (EPHX4).